The following is a 502-amino-acid chain: Glutamate dehydrogenase, mitochondrial (502 aa).

96-98 lines the NAD(+) pocket; that stretch reads HHR. K102 and K126 together coordinate substrate. Residue D131 participates in NAD(+) binding. Residue K138 is part of the active site. S394 is a substrate binding site.

The protein belongs to the Glu/Leu/Phe/Val dehydrogenases family. As to quaternary structure, homohexamer.

It is found in the mitochondrion matrix. The enzyme catalyses L-glutamate + NAD(+) + H2O = 2-oxoglutarate + NH4(+) + NADH + H(+). The catalysed reaction is L-glutamate + NADP(+) + H2O = 2-oxoglutarate + NH4(+) + NADPH + H(+). Its activity is regulated as follows. Subject to allosteric regulation. Activated by AMP and ADP. In Dictyostelium discoideum (Social amoeba), this protein is Glutamate dehydrogenase, mitochondrial (gluD).